The chain runs to 1087 residues: Ubiquitin-associated protein 2-like (1087 aa).

At Met1 the chain carries N-acetylmethionine. Residues 1-33 form a disordered region; it reads MMTSVGTNRARGNWEQPQNQNQTQHKQRPQATA. In terms of domain architecture, UBA spans 49 to 89; it reads DFEEKVKQLIDITGKNQDECVIALHDCNGDVNRAINVLLEG. The tract at residues 92–234 is disordered; that stretch reads DTHSWEMVGK…TGHFEPDDGT (143 aa). The segment covering 118 to 132 has biased composition (basic and acidic residues); sequence EEGKENRDRDRDYSR. Residues 133-145 are compositionally biased toward basic residues; that stretch reads RRGGPPRRGRGAS. Arg187 and Arg190 each carry asymmetric dimethylarginine. The segment covering 213–226 has biased composition (low complexity); that stretch reads NYGNSSGNTWNNTG. Phosphoserine occurs at positions 356 and 360. Low complexity predominate over residues 377 to 389; the sequence is AQHSQSGSTTTSS. A disordered region spans residues 377 to 420; that stretch reads AQHSQSGSTTTSSWDMGSTTQSPSLVQYDLKNPSDSAVHSPFTK. Over residues 390–401 the composition is skewed to polar residues; it reads WDMGSTTQSPSL. 2 positions are modified to phosphoserine: Ser410 and Ser416. Thr425 is subject to Phosphothreonine. Ser439, Ser454, Ser467, Ser470, Ser471, and Ser477 each carry phosphoserine. Disordered stretches follow at residues 440–493, 530–656, and 669–794; these read PAVA…KKAS, SDYE…IPPL, and TNQH…LPPG. Low complexity-rich tracts occupy residues 474–485 and 534–569; these read QSSSPQPAQQKL and STPT…SQES. Over residues 570–656 the composition is skewed to polar residues; that stretch reads GYQSGPIQST…SPSTSSIPPL (87 aa). Residues Ser604, Ser605, Ser608, and Ser609 each carry the phosphoserine modification. The span at 688-784 shows a compositional bias: low complexity; it reads TTTTQHSSTL…STRSSVATTS (97 aa). Ser852 and Ser859 each carry phosphoserine. Residues 865–901 form a disordered region; sequence FGRGDASSPAPATTLAQPQQNQTQTHHTTQQTFLNPA. Residues 873 to 896 are compositionally biased toward low complexity; the sequence is PAPATTLAQPQQNQTQTHHTTQQT. 2 positions are modified to omega-N-methylarginine: Ser962 and Val969. An N6-acetyllysine mark is found at Val969 and Thr976. A disordered region spans residues 1040–1087; it reads QQPHSQILHHHLQQDGQTGSGQRSQTSSIPQKPQTNKSAYNSYSWGAN. The span at 1053-1067 shows a compositional bias: low complexity; the sequence is QDGQTGSGQRSQTSS. Residues 1068 to 1087 are compositionally biased toward polar residues; the sequence is IPQKPQTNKSAYNSYSWGAN.

As to quaternary structure, interacts with BMI1. Part of a complex consisting of UBAP2L, BMI1 and RNF2. Interacts with G3BP1 (via NTF2 domain); promoting stress granule formation. In terms of processing, acetylated. As to expression, ubiquitous.

The protein localises to the nucleus. It is found in the chromosome. Its subcellular location is the cytoplasm. The protein resides in the stress granule. Recruits the ubiquitination machinery to RNA polymerase II for polyubiquitination, removal and degradation, when the transcription-coupled nucleotide excision repair (TC-NER) machinery fails to resolve DNA damage. Plays an important role in the activity of long-term repopulating hematopoietic stem cells (LT-HSCs). Is a regulator of stress granule assembly, required for their efficient formation. Required for proper brain development and neocortex lamination. The protein is Ubiquitin-associated protein 2-like of Homo sapiens (Human).